A 446-amino-acid polypeptide reads, in one-letter code: Na(+)-translocating NADH-quinone reductase subunit A (446 aa).

It belongs to the NqrA family. Composed of six subunits; NqrA, NqrB, NqrC, NqrD, NqrE and NqrF.

The catalysed reaction is a ubiquinone + n Na(+)(in) + NADH + H(+) = a ubiquinol + n Na(+)(out) + NAD(+). In terms of biological role, NQR complex catalyzes the reduction of ubiquinone-1 to ubiquinol by two successive reactions, coupled with the transport of Na(+) ions from the cytoplasm to the periplasm. NqrA to NqrE are probably involved in the second step, the conversion of ubisemiquinone to ubiquinol. This Vibrio campbellii (strain ATCC BAA-1116) protein is Na(+)-translocating NADH-quinone reductase subunit A.